A 119-amino-acid chain; its full sequence is uncharacterized protein (119 aa).

This is an uncharacterized protein from Methanocaldococcus jannaschii (strain ATCC 43067 / DSM 2661 / JAL-1 / JCM 10045 / NBRC 100440) (Methanococcus jannaschii).